The chain runs to 636 residues: Biosynthetic arginine decarboxylase (636 aa).

Lysine 101 carries the post-translational modification N6-(pyridoxal phosphate)lysine. 286–296 provides a ligand contact to substrate; the sequence is FDVGGGLAVDY.

This sequence belongs to the Orn/Lys/Arg decarboxylase class-II family. SpeA subfamily. Mg(2+) is required as a cofactor. Requires pyridoxal 5'-phosphate as cofactor.

It carries out the reaction L-arginine + H(+) = agmatine + CO2. The protein operates within amine and polyamine biosynthesis; agmatine biosynthesis; agmatine from L-arginine: step 1/1. Its function is as follows. Catalyzes the biosynthesis of agmatine from arginine. The polypeptide is Biosynthetic arginine decarboxylase (Shewanella amazonensis (strain ATCC BAA-1098 / SB2B)).